The sequence spans 397 residues: uncharacterized protein (397 aa).

The next 10 membrane-spanning stretches (helical) occupy residues 2–24 (LNLL…PGIH), 44–66 (YIPF…SAFL), 92–114 (AIVL…SLFL), 124–143 (AFYC…FILY), 150–169 (SVWE…AVLY), 173–195 (AFNI…INNL), 255–277 (FIVS…VIFI), 297–319 (INTA…LNLS), 331–350 (FKFL…IIGS), and 354–373 (YLIY…LLAV).

The protein resides in the cell membrane. This is an uncharacterized protein from Methanocaldococcus jannaschii (strain ATCC 43067 / DSM 2661 / JAL-1 / JCM 10045 / NBRC 100440) (Methanococcus jannaschii).